The sequence spans 262 residues: Zinc import ATP-binding protein ZnuC (262 aa).

The 217-residue stretch at 4–220 folds into the ABC transporter domain; that stretch reads LNLSGVRLSH…PEYLALFGPR (217 aa). An ATP-binding site is contributed by 36–43; sequence GPNGAGKS. The interval 238–262 is disordered; sequence ADGSVLPLAEGGGEPHTHGPGCRHG.

This sequence belongs to the ABC transporter superfamily. Zinc importer (TC 3.A.1.15.5) family. As to quaternary structure, the complex is composed of two ATP-binding proteins (ZnuC), two transmembrane proteins (ZnuB) and a solute-binding protein (ZnuA).

The protein resides in the cell inner membrane. The enzyme catalyses Zn(2+)(out) + ATP(in) + H2O(in) = Zn(2+)(in) + ADP(in) + phosphate(in) + H(+)(in). Part of the ABC transporter complex ZnuABC involved in zinc import. Responsible for energy coupling to the transport system. This is Zinc import ATP-binding protein ZnuC from Paramagnetospirillum magneticum (strain ATCC 700264 / AMB-1) (Magnetospirillum magneticum).